Reading from the N-terminus, the 555-residue chain is Solute carrier family 2, facilitated glucose transporter member 10 (555 aa).

The Cytoplasmic segment spans residues Met-1 to Ser-15. The chain crosses the membrane as a helical span at residues Leu-16–Leu-36. The Extracellular portion of the chain corresponds to Lys-37–Glu-48. A helical membrane pass occupies residues Ala-49–Ile-69. Topologically, residues Asp-70 to Asn-82 are cytoplasmic. The chain crosses the membrane as a helical span at residues Leu-83–Val-103. The Extracellular segment spans residues Gly-104–Arg-105. Residues Val-106–Ile-126 traverse the membrane as a helical segment. Residues Val-127–Arg-132 are Cytoplasmic-facing. The chain crosses the membrane as a helical span at residues Gly-133 to Met-153. Topologically, residues Asn-154–Lys-165 are extracellular. Asn-161 carries N-linked (GlcNAc...) asparagine glycosylation. Residues Tyr-166–Pro-186 traverse the membrane as a helical segment. Residues Ser-187–Thr-240 are Cytoplasmic-facing. A helical transmembrane segment spans residues Leu-241 to Tyr-261. Residue Gln-250–Gln-251 participates in D-glucose binding. Residues Ala-262–Ala-277 are Extracellular-facing. Asn-274 carries an N-linked (GlcNAc...) asparagine glycan. Residues Val-278 to Phe-298 form a helical membrane-spanning segment. Residues Ala-299–Arg-305 lie on the Cytoplasmic side of the membrane. A helical transmembrane segment spans residues Ile-306 to Ser-326. At Phe-327–Thr-415 the chain is on the extracellular side. Residues Asn-344, Asn-351, Asn-400, and Asn-413 are each glycosylated (N-linked (GlcNAc...) asparagine). Residues Ile-416–Phe-436 traverse the membrane as a helical segment. Topologically, residues Gly-437 to Asn-464 are cytoplasmic. Trp-441 serves as a coordination point for D-glucose. A helical transmembrane segment spans residues Trp-465–Gly-483. Residues Leu-484–Ser-485 lie on the Extracellular side of the membrane. The chain crosses the membrane as a helical span at residues Trp-486–Ile-506. The Cytoplasmic segment spans residues Pro-507–Ser-555. Positions Gln-528–Ser-555 are disordered.

This sequence belongs to the major facilitator superfamily. Sugar transporter (TC 2.A.1.1) family. Glucose transporter subfamily.

The protein localises to the endomembrane system. Its subcellular location is the cytoplasm. It is found in the perinuclear region. It catalyses the reaction D-glucose(out) = D-glucose(in). Functionally, facilitative glucose transporter required for the development of the cardiovascular system. In Xenopus tropicalis (Western clawed frog), this protein is Solute carrier family 2, facilitated glucose transporter member 10.